Reading from the N-terminus, the 1418-residue chain is Protein ced-11 (1418 aa).

7 helical membrane-spanning segments follow: residues 617-637 (FPIFLPKWAKICISAVLIIPV), 755-775 (YWLSLLFRIVFICCLAYSVVL), 782-802 (LWDTGMWVWSFFWWIENCFVL), 818-838 (VFDVFAFFVFLILLLVMKVFP), 856-876 (VVSAFFVLYVSYSTLFTYIPL), 898-918 (FLFMIALVMLSSAVAIQAVVF), and 986-1006 (IVIEYFVILKLLLWPILFAFF).

Its subcellular location is the membrane. Its function is as follows. Plays a major role in programmed cell death. This is Protein ced-11 (ced-11) from Caenorhabditis elegans.